The primary structure comprises 290 residues: Protein CREG2 (290 aa).

A signal peptide spans Met1–Gly31. N-linked (GlcNAc...) asparagine glycosylation is found at Asn165 and Asn166.

The protein belongs to the CREG family. It is not sure whether N-glycosylation is on Asn-165 and/or Asn-166. In terms of tissue distribution, brain specific mainly in the limbic system and faintly in the spinal cord but not in cerebellum.

Its subcellular location is the secreted. The polypeptide is Protein CREG2 (CREG2) (Homo sapiens (Human)).